Reading from the N-terminus, the 550-residue chain is Chaperonin GroEL (550 aa).

Residues 30-33 (TLGP), Lys51, 87-91 (DGTTT), Gly415, and Asp495 contribute to the ATP site.

Belongs to the chaperonin (HSP60) family. In terms of assembly, forms a cylinder of 14 subunits composed of two heptameric rings stacked back-to-back. Interacts with the co-chaperonin GroES.

It localises to the cytoplasm. It carries out the reaction ATP + H2O + a folded polypeptide = ADP + phosphate + an unfolded polypeptide.. Its function is as follows. Together with its co-chaperonin GroES, plays an essential role in assisting protein folding. The GroEL-GroES system forms a nano-cage that allows encapsulation of the non-native substrate proteins and provides a physical environment optimized to promote and accelerate protein folding. This chain is Chaperonin GroEL, found in Shewanella piezotolerans (strain WP3 / JCM 13877).